The sequence spans 144 residues: Small ribosomal subunit protein uS12 (144 aa).

Residue aspartate 103 is modified to 3-methylthioaspartic acid. The interval 121-144 (VANRKQGRSKYGTKKASAVPAKKK) is disordered.

The protein belongs to the universal ribosomal protein uS12 family. Part of the 30S ribosomal subunit. Contacts proteins S8 and S17. May interact with IF1 in the 30S initiation complex.

Functionally, with S4 and S5 plays an important role in translational accuracy. Interacts with and stabilizes bases of the 16S rRNA that are involved in tRNA selection in the A site and with the mRNA backbone. Located at the interface of the 30S and 50S subunits, it traverses the body of the 30S subunit contacting proteins on the other side and probably holding the rRNA structure together. The combined cluster of proteins S8, S12 and S17 appears to hold together the shoulder and platform of the 30S subunit. This is Small ribosomal subunit protein uS12 from Roseiflexus castenholzii (strain DSM 13941 / HLO8).